The primary structure comprises 334 residues: Geminin coiled-coil domain-containing protein 1 (334 aa).

A coiled-coil region spans residues 82 to 119 (SQLYRNKQLQDTLVQKEEELARLHEENNHLRQYLNSAL). A disordered region spans residues 143 to 167 (FRKGKRKSKEQRYSPAEIPHPKNAK).

Belongs to the GEMC1 family. In terms of processing, highly phosphorylated by CDK2; stimulates initiation of DNA replication.

It localises to the nucleus. Its function is as follows. Regulator of DNA replication. Promotes initiation of chromosomal DNA replication by mediating TOPBP1- and CDK2-dependent recruitment of CDC45L onto replication origins. The sequence is that of Geminin coiled-coil domain-containing protein 1 (GMNC) from Homo sapiens (Human).